Consider the following 446-residue polypeptide: Histidine--tRNA ligase (446 aa).

Belongs to the class-II aminoacyl-tRNA synthetase family. Homodimer.

It localises to the cytoplasm. The catalysed reaction is tRNA(His) + L-histidine + ATP = L-histidyl-tRNA(His) + AMP + diphosphate + H(+). This chain is Histidine--tRNA ligase, found in Burkholderia vietnamiensis (strain G4 / LMG 22486) (Burkholderia cepacia (strain R1808)).